A 594-amino-acid polypeptide reads, in one-letter code: Bifunctional lycopene cyclase/phytoene synthase (594 aa).

The interval 1–249 is lycopene beta-cyclase; sequence MGLDYLMVHV…VVFGIAAMHN (249 aa). 7 helical membrane passes run 3-23, 35-55, 77-97, 130-150, 153-173, 176-196, and 227-247; these read LDYL…LTIL, KIVL…SYLI, LEEV…YIIF, LGTL…YIGG, MYLG…WVLM, FLLA…TLYL, and IEEA…IAAM. Residues 256-594 are phytoene synthase; it reads YKAFISTTAM…RFKRAWLAML (339 aa).

The protein in the N-terminal section; belongs to the lycopene beta-cyclase family. It in the C-terminal section; belongs to the phytoene/squalene synthase family.

It localises to the membrane. It catalyses the reaction all-trans-lycopene = gamma-carotene. The enzyme catalyses gamma-carotene = all-trans-beta-carotene. The catalysed reaction is 2 (2E,6E,10E)-geranylgeranyl diphosphate = 15-cis-phytoene + 2 diphosphate. Its pathway is carotenoid biosynthesis; beta-carotene biosynthesis. It participates in carotenoid biosynthesis; phytoene biosynthesis; all-trans-phytoene from geranylgeranyl diphosphate: step 1/1. In terms of biological role, bifunctional enzyme that catalyzes the reactions from geranylgeranyl diphosphate to phytoene (phytoene synthase) and lycopene to beta-carotene via the intermediate gamma-carotene (lycopene cyclase). The chain is Bifunctional lycopene cyclase/phytoene synthase from Arthroderma gypseum (strain ATCC MYA-4604 / CBS 118893) (Microsporum gypseum).